The primary structure comprises 277 residues: Ribosomal RNA small subunit methyltransferase A (277 aa).

The S-adenosyl-L-methionine site is built by Asn20, Leu22, Gly47, Glu68, Asp93, and Asn114.

Belongs to the class I-like SAM-binding methyltransferase superfamily. rRNA adenine N(6)-methyltransferase family. RsmA subfamily.

The protein resides in the cytoplasm. The enzyme catalyses adenosine(1518)/adenosine(1519) in 16S rRNA + 4 S-adenosyl-L-methionine = N(6)-dimethyladenosine(1518)/N(6)-dimethyladenosine(1519) in 16S rRNA + 4 S-adenosyl-L-homocysteine + 4 H(+). Its function is as follows. Specifically dimethylates two adjacent adenosines (A1518 and A1519) in the loop of a conserved hairpin near the 3'-end of 16S rRNA in the 30S particle. May play a critical role in biogenesis of 30S subunits. In Aliivibrio salmonicida (strain LFI1238) (Vibrio salmonicida (strain LFI1238)), this protein is Ribosomal RNA small subunit methyltransferase A.